Consider the following 447-residue polypeptide: N-succinylarginine dihydrolase (447 aa).

Substrate-binding positions include 19-28, N110, and 137-138; these read AGLSFGNEAS and HR. The active site involves E174. R212 serves as a coordination point for substrate. The active site involves H248. Substrate contacts are provided by D250 and N359. The active-site Nucleophile is the C365.

This sequence belongs to the succinylarginine dihydrolase family. In terms of assembly, homodimer.

The catalysed reaction is N(2)-succinyl-L-arginine + 2 H2O + 2 H(+) = N(2)-succinyl-L-ornithine + 2 NH4(+) + CO2. It functions in the pathway amino-acid degradation; L-arginine degradation via AST pathway; L-glutamate and succinate from L-arginine: step 2/5. Catalyzes the hydrolysis of N(2)-succinylarginine into N(2)-succinylornithine, ammonia and CO(2). The sequence is that of N-succinylarginine dihydrolase from Salmonella agona (strain SL483).